Here is a 263-residue protein sequence, read N- to C-terminus: MLDLANMTPKEVRALIGKNEINKPTSGMCKGHIQANLVIVPKNLAYDFLLFAQRNPKSCPILDVTDVGSSEPRLMAKGADLKSDVPMYRIYEFGELVAEVSDLTDYWREDLVCFLLGCSFSFESAMLNASIPVRHIEDNHNVPMYITNIETEPAGQFHGKMVVSMRPIPYPLITRAVQATSRFPQVHGAPIHIGDPSVIGITDIHSPDFGDASLIKEGEVPVFWACGVTPQSIAMTSKPELMITHSPGYMFICDPKDEDLAVL.

This sequence belongs to the D-glutamate cyclase family.

The polypeptide is Putative hydro-lyase Psyc_1103 (Psychrobacter arcticus (strain DSM 17307 / VKM B-2377 / 273-4)).